A 976-amino-acid polypeptide reads, in one-letter code: Mast/stem cell growth factor receptor kita (976 aa).

An N-terminal signal peptide occupies residues 1-21 (MEYHCVLFTVLLQLIIQPGRS). The Extracellular segment spans residues 22–515 (RPTITPEGPR…NTVPHELFTP (494 aa)). Ig-like C2-type domains follow at residues 23–105 (PTIT…VYVK), 100–199 (IYVY…LTVR), 206–301 (PPIT…VWVN), 308–402 (INIT…FEVH), and 399–504 (FEVH…FSIS). Residues asparagine 39 and asparagine 47 are each glycosylated (N-linked (GlcNAc...) asparagine). Intrachain disulfides connect cysteine 44–cysteine 89, cysteine 131–cysteine 180, cysteine 146–cysteine 177, and cysteine 228–cysteine 285. 6 N-linked (GlcNAc...) asparagine glycosylation sites follow: asparagine 282, asparagine 309, asparagine 315, asparagine 352, asparagine 449, and asparagine 477. Residues cysteine 422 and cysteine 488 are joined by a disulfide bond. The helical transmembrane segment at 516–536 (LLIGFVAAAVILVLILIVLTY) threads the bilayer. Residues 537 to 976 (KYMQKPKYQI…DRSSPSHPVV (440 aa)) lie on the Cytoplasmic side of the membrane. Residue tyrosine 559 participates in Mg(2+) binding. Residues tyrosine 559 and tyrosine 561 each carry the phosphotyrosine; by autocatalysis modification. Residues 580-922 (LRFGKTLGSG…ISDSTKHIYL (343 aa)) enclose the Protein kinase domain. Residues 587–594 (GSGAFGKV), lysine 614, and 662–668 (EYCCFGD) contribute to the ATP site. Residues tyrosine 691 and tyrosine 707 each carry the phosphotyrosine; by autocatalysis modification. Aspartate 777 acts as the Proton acceptor in catalysis. Arginine 781 lines the ATP pocket. Positions 782 and 795 each coordinate Mg(2+). A phosphotyrosine; by autocatalysis mark is found at tyrosine 808 and tyrosine 921. The segment at 929–976 (PAAPGPREESSSHVHRLNSVGSHSTATQPLLSSNDVFLDRSSPSHPVV) is disordered. The span at 947–976 (SVGSHSTATQPLLSSNDVFLDRSSPSHPVV) shows a compositional bias: polar residues.

Belongs to the protein kinase superfamily. Tyr protein kinase family. CSF-1/PDGF receptor subfamily. Ubiquitinated. Rapidly ubiquitinated after autophosphorylation induced by kitlg/scf binding, leading to internalization and degradation. Post-translationally, autophosphorylated on tyrosine residues. Phosphorylated tyrosine residues are important for interaction with specific binding partners. As to expression, expressed in cells of the neural crest-melanocyte lineage. In the embryo, also expressed in mesodermal cells that give rise to hematopoietic precursors, notochord, neural crest-derived cells of the branchial arches, pineal gland, retina and mechanoreceptive sensory cells of lateral line neuromasts. Not detected in primordial germ cells or larval gut.

It is found in the cell membrane. The enzyme catalyses L-tyrosyl-[protein] + ATP = O-phospho-L-tyrosyl-[protein] + ADP + H(+). Tyrosine-protein kinase that acts as a cell-surface receptor for the cytokine kitlg/scf and plays a role in the regulation of cell survival and proliferation, hematopoiesis, stem cell maintenance, gametogenesis, and in mast cell development, migration and function. Required for the migration of cells in the melanocyte lineage and the survival of embryonic melanocytes. Required for the differentiation of some, but not all, melanocytes. Not essential for hematopoiesis or primordial germ cell development. This is Mast/stem cell growth factor receptor kita (kita) from Danio rerio (Zebrafish).